Consider the following 1081-residue polypeptide: Importin-4 (1081 aa).

Position 1 is an N-acetylmethionine (Met1). The Importin N-terminal domain maps to Ala24–Arg90. HEAT repeat units lie at residues Lys348 to Asp385, Arg390 to Pro427, Ser431 to Pro471, Pro475 to Ala513, Gln895 to His932, and Glu936 to Thr974.

It belongs to the importin beta family. As to quaternary structure, found in a cytosolic complex with ASF1 (ASF1A or ASF1B) and histones H3 and H4.

The protein localises to the cytoplasm. It localises to the nucleus. Functionally, nuclear transport receptor that mediates nuclear import of proteins, such as histones, RPS3A, TNP2 and VDR. Serves as receptor for nuclear localization signals (NLS) in cargo substrates. Is thought to mediate docking of the importin/substrate complex to the nuclear pore complex (NPC) through binding to nucleoporin and the complex is subsequently translocated through the pore by an energy requiring, Ran-dependent mechanism. At the nucleoplasmic side of the NPC, Ran binds to the importin, the importin/substrate complex dissociates and importin is re-exported from the nucleus to the cytoplasm where GTP hydrolysis releases Ran. The directionality of nuclear import is thought to be conferred by an asymmetric distribution of the GTP- and GDP-bound forms of Ran between the cytoplasm and nucleus. Mediates the nuclear import of the histone H3-H4 dimer when in complex with ASF1 (ASF1A or ASF1B). Mediates the ligand-independent nuclear import of vitamin D receptor (VDR). In vitro, mediates the nuclear import of human cytomegalovirus UL84 by recognizing a non-classical NLS. The sequence is that of Importin-4 (IPO4) from Homo sapiens (Human).